We begin with the raw amino-acid sequence, 169 residues long: MVGLPTHTLSVLVEDTPGVLARVAALFSRRGFNIESLAVGATECKTMSRMTIVVSAEETPLEQVTKQLHKLINVIKVVEQEADNSLSRELALIKVRAEAGTRSQVIEAVHLFRARVIDVSLESLTVEATGDCSKIEALLRVLEPFGVREIVQSGVVSLSRGPRGIGTVR.

The region spanning 8–85 (TLSVLVEDTP…KVVEQEADNS (78 aa)) is the ACT domain.

Belongs to the acetolactate synthase small subunit family. Dimer of large and small chains.

It carries out the reaction 2 pyruvate + H(+) = (2S)-2-acetolactate + CO2. It functions in the pathway amino-acid biosynthesis; L-isoleucine biosynthesis; L-isoleucine from 2-oxobutanoate: step 1/4. Its pathway is amino-acid biosynthesis; L-valine biosynthesis; L-valine from pyruvate: step 1/4. This chain is Acetolactate synthase small subunit (ilvH), found in Mycobacterium leprae (strain TN).